A 107-amino-acid chain; its full sequence is UPF0060 membrane protein A1S_1909 (107 aa).

Transmembrane regions (helical) follow at residues 2-22, 28-48, 56-76, and 85-105; these read FGLFIITAIAEILGCYFPYLI, SAWLWLPTALSLAVFVWLLTL, IYAAYGGIYIFTALMWLRFVD, and ILGGVIVLCGAGLIILQPQGL.

This sequence belongs to the UPF0060 family.

The protein localises to the cell inner membrane. This is UPF0060 membrane protein A1S_1909 from Acinetobacter baumannii (strain ATCC 17978 / DSM 105126 / CIP 53.77 / LMG 1025 / NCDC KC755 / 5377).